Reading from the N-terminus, the 177-residue chain is ATP synthase subunit delta (177 aa).

This sequence belongs to the ATPase delta chain family. F-type ATPases have 2 components, F(1) - the catalytic core - and F(0) - the membrane proton channel. F(1) has five subunits: alpha(3), beta(3), gamma(1), delta(1), epsilon(1). CF(0) has four main subunits: a(1), b(1), b'(1) and c(10-14). The alpha and beta chains form an alternating ring which encloses part of the gamma chain. F(1) is attached to F(0) by a central stalk formed by the gamma and epsilon chains, while a peripheral stalk is formed by the delta, b and b' chains.

The protein localises to the cell inner membrane. F(1)F(0) ATP synthase produces ATP from ADP in the presence of a proton or sodium gradient. F-type ATPases consist of two structural domains, F(1) containing the extramembraneous catalytic core and F(0) containing the membrane proton channel, linked together by a central stalk and a peripheral stalk. During catalysis, ATP synthesis in the catalytic domain of F(1) is coupled via a rotary mechanism of the central stalk subunits to proton translocation. In terms of biological role, this protein is part of the stalk that links CF(0) to CF(1). It either transmits conformational changes from CF(0) to CF(1) or is implicated in proton conduction. The polypeptide is ATP synthase subunit delta (Methylibium petroleiphilum (strain ATCC BAA-1232 / LMG 22953 / PM1)).